We begin with the raw amino-acid sequence, 248 residues long: 3-deoxy-manno-octulosonate cytidylyltransferase 2 (248 aa).

This sequence belongs to the KdsB family.

The protein resides in the cytoplasm. The catalysed reaction is 3-deoxy-alpha-D-manno-oct-2-ulosonate + CTP = CMP-3-deoxy-beta-D-manno-octulosonate + diphosphate. It participates in nucleotide-sugar biosynthesis; CMP-3-deoxy-D-manno-octulosonate biosynthesis; CMP-3-deoxy-D-manno-octulosonate from 3-deoxy-D-manno-octulosonate and CTP: step 1/1. It functions in the pathway bacterial outer membrane biogenesis; lipopolysaccharide biosynthesis. Its function is as follows. Activates KDO (a required 8-carbon sugar) for incorporation into bacterial lipopolysaccharide in Gram-negative bacteria. The sequence is that of 3-deoxy-manno-octulosonate cytidylyltransferase 2 from Hydrogenovibrio crunogenus (strain DSM 25203 / XCL-2) (Thiomicrospira crunogena).